Here is a 209-residue protein sequence, read N- to C-terminus: Response regulator protein VraR (209 aa).

In terms of domain architecture, Response regulatory spans 4-120 (KVLFVDDHEM…DIADAVRKTS (117 aa)). Asp-55 carries the 4-aspartylphosphate modification. An HTH luxR-type domain is found at 141-206 (RAELYEMLTE…QAVIYAFQHN (66 aa)). The segment at residues 165-184 (NQEIASASHITIKTVKTHVS) is a DNA-binding region (H-T-H motif).

As to quaternary structure, homodimer. Post-translationally, phosphorylated by VraS. Phosphorylation state of VraR controls dimerization of the protein.

Functionally, member of the two-component regulatory system VraS/VraR involved in the control of the cell wall peptidoglycan biosynthesis. Upon cellular stress, the histidine kinase VraS transfers the phosphoryl group onto VraR. Upon phosphorylation, VraR dimerizes at the N-terminal domain. In turn, phosphorylation-induced dimerization expand and enhance the VraR binding to its own promoter leading to increased expression and subsequent modulation of as many as 40 genes, which ultimately constitute the S.aureus response to cell wall damage. In addition, inhibits the host autophagic flux and delays the early stage of autophagosome formation, thereby promoting bacterial survival. Facilitates the ability of S.aureus to resist host polymorphonuclear leukocytes-mediated phagocytosis and killing thus contributing to immune evasion. The protein is Response regulator protein VraR (vraR) of Staphylococcus aureus (strain NCTC 8325 / PS 47).